Consider the following 220-residue polypeptide: Putative glutathione S-transferase C1183.02 (220 aa).

Residues 2 to 81 (FLGTLYSFKT…YFYEKGKHND (80 aa)) form the GST N-terminal domain. Positions 89–216 (NEVEEAEMLK…FPLELPLTVT (128 aa)) constitute a GST C-terminal domain.

The protein belongs to the GST superfamily.

Its subcellular location is the cytoplasm. It carries out the reaction RX + glutathione = an S-substituted glutathione + a halide anion + H(+). Its function is as follows. Involved in the oxidative stress response and detoxification. In Schizosaccharomyces pombe (strain 972 / ATCC 24843) (Fission yeast), this protein is Putative glutathione S-transferase C1183.02.